Consider the following 147-residue polypeptide: Small ribosomal subunit protein uS12 (147 aa).

The protein belongs to the universal ribosomal protein uS12 family. In terms of assembly, part of the 30S ribosomal subunit.

Its function is as follows. With S4 and S5 plays an important role in translational accuracy. Located at the interface of the 30S and 50S subunits. The protein is Small ribosomal subunit protein uS12 of Pyrobaculum calidifontis (strain DSM 21063 / JCM 11548 / VA1).